The primary structure comprises 177 residues: uncharacterized protein (177 aa).

This sequence to M.jannaschii MJ0628.

This is an uncharacterized protein from Methanocaldococcus jannaschii (strain ATCC 43067 / DSM 2661 / JAL-1 / JCM 10045 / NBRC 100440) (Methanococcus jannaschii).